We begin with the raw amino-acid sequence, 417 residues long: Putative competence-damage inducible protein (417 aa).

The protein belongs to the CinA family.

This is Putative competence-damage inducible protein from Oceanobacillus iheyensis (strain DSM 14371 / CIP 107618 / JCM 11309 / KCTC 3954 / HTE831).